The following is a 400-amino-acid chain: Acetate kinase (400 aa).

N10 is a Mg(2+) binding site. K17 contributes to the ATP binding site. R91 provides a ligand contact to substrate. Catalysis depends on D150, which acts as the Proton donor/acceptor. Residues 210-214 (HLGNG), 285-287 (DCR), and 333-337 (GIGEN) contribute to the ATP site. E387 contacts Mg(2+).

Belongs to the acetokinase family. Homodimer. It depends on Mg(2+) as a cofactor. Requires Mn(2+) as cofactor.

It localises to the cytoplasm. The enzyme catalyses acetate + ATP = acetyl phosphate + ADP. Its pathway is metabolic intermediate biosynthesis; acetyl-CoA biosynthesis; acetyl-CoA from acetate: step 1/2. In terms of biological role, catalyzes the formation of acetyl phosphate from acetate and ATP. Can also catalyze the reverse reaction. This Yersinia pseudotuberculosis serotype I (strain IP32953) protein is Acetate kinase.